Here is a 320-residue protein sequence, read N- to C-terminus: o-succinylbenzoate synthase (320 aa).

K133 serves as the catalytic Proton donor. Residues D161, E190, and D213 each coordinate Mg(2+). Catalysis depends on K235, which acts as the Proton acceptor.

The protein belongs to the mandelate racemase/muconate lactonizing enzyme family. MenC type 1 subfamily. A divalent metal cation serves as cofactor.

The catalysed reaction is (1R,6R)-6-hydroxy-2-succinyl-cyclohexa-2,4-diene-1-carboxylate = 2-succinylbenzoate + H2O. It participates in quinol/quinone metabolism; 1,4-dihydroxy-2-naphthoate biosynthesis; 1,4-dihydroxy-2-naphthoate from chorismate: step 4/7. It functions in the pathway quinol/quinone metabolism; menaquinone biosynthesis. Converts 2-succinyl-6-hydroxy-2,4-cyclohexadiene-1-carboxylate (SHCHC) to 2-succinylbenzoate (OSB). This Salmonella enteritidis PT4 (strain P125109) protein is o-succinylbenzoate synthase.